Reading from the N-terminus, the 319-residue chain is DNA-directed RNA polymerase subunit alpha (319 aa).

The interval 1 to 227 (MKEFIFPMKI…KHMNMLTNIS (227 aa)) is alpha N-terminal domain (alpha-NTD). Residues 242 to 319 (LMEKLTFSIE…NIGEQRSSEV (78 aa)) form an alpha C-terminal domain (alpha-CTD) region.

This sequence belongs to the RNA polymerase alpha chain family. Homodimer. The RNAP catalytic core consists of 2 alpha, 1 beta, 1 beta' and 1 omega subunit. When a sigma factor is associated with the core the holoenzyme is formed, which can initiate transcription.

The enzyme catalyses RNA(n) + a ribonucleoside 5'-triphosphate = RNA(n+1) + diphosphate. In terms of biological role, DNA-dependent RNA polymerase catalyzes the transcription of DNA into RNA using the four ribonucleoside triphosphates as substrates. The protein is DNA-directed RNA polymerase subunit alpha of Hydrogenobaculum sp. (strain Y04AAS1).